We begin with the raw amino-acid sequence, 994 residues long: Alpha-mannosidase F (994 aa).

Positions 1–20 (MKNFYYFILILLFFNEVCYS) are cleaved as a signal peptide. Positions 35, 37, and 151 each coordinate Zn(2+). Residue Asp-151 is the Nucleophile of the active site. Asn-247 and Asn-381 each carry an N-linked (GlcNAc...) asparagine glycan. Position 392 (His-392) interacts with Zn(2+). Asn-554, Asn-712, and Asn-932 each carry an N-linked (GlcNAc...) asparagine glycan.

It belongs to the glycosyl hydrolase 38 family. Zn(2+) serves as cofactor.

The protein resides in the secreted. The catalysed reaction is Hydrolysis of terminal, non-reducing alpha-D-mannose residues in alpha-D-mannosides.. The chain is Alpha-mannosidase F (manF) from Dictyostelium discoideum (Social amoeba).